Consider the following 261-residue polypeptide: Potassium/proton antiporter CemA (261 aa).

Transmembrane regions (helical) follow at residues phenylalanine 47–valine 67 and isoleucine 138–methionine 158.

Belongs to the CemA family.

The protein resides in the plastid. Its subcellular location is the chloroplast inner membrane. The catalysed reaction is K(+)(in) + H(+)(out) = K(+)(out) + H(+)(in). Functionally, contributes to K(+)/H(+) antiport activity by supporting proton efflux to control proton extrusion and homeostasis in chloroplasts in a light-dependent manner to modulate photosynthesis. Prevents excessive induction of non-photochemical quenching (NPQ) under continuous-light conditions. Indirectly promotes efficient inorganic carbon uptake into chloroplasts. In Ginkgo biloba (Ginkgo), this protein is Potassium/proton antiporter CemA.